The primary structure comprises 201 residues: Large ribosomal subunit protein uL4 (201 aa).

The segment at 45–72 (AQKTRAEVTGSGKKPWRQKGTGRARAGS) is disordered.

Belongs to the universal ribosomal protein uL4 family. As to quaternary structure, part of the 50S ribosomal subunit.

Functionally, one of the primary rRNA binding proteins, this protein initially binds near the 5'-end of the 23S rRNA. It is important during the early stages of 50S assembly. It makes multiple contacts with different domains of the 23S rRNA in the assembled 50S subunit and ribosome. In terms of biological role, forms part of the polypeptide exit tunnel. In Shewanella frigidimarina (strain NCIMB 400), this protein is Large ribosomal subunit protein uL4.